The chain runs to 235 residues: Small ribosomal subunit protein uS3 (235 aa).

Positions 39–107 (VRKFLLGQLS…PTKLNISEIR (69 aa)) constitute a KH type-2 domain.

Belongs to the universal ribosomal protein uS3 family. In terms of assembly, part of the 30S ribosomal subunit. Forms a tight complex with proteins S10 and S14.

Binds the lower part of the 30S subunit head. Binds mRNA in the 70S ribosome, positioning it for translation. This is Small ribosomal subunit protein uS3 from Blochmanniella floridana.